The sequence spans 204 residues: uncharacterized protein (204 aa).

Helical transmembrane passes span 21–50 (AWIV…LLFF), 92–114 (FFTA…WWWF), 150–172 (LGLR…VLSI), and 176–198 (LLAS…ETIL).

Its subcellular location is the cell membrane. This is an uncharacterized protein from Aquifex aeolicus (strain VF5).